Here is a 324-residue protein sequence, read N- to C-terminus: ATP synthase mitochondrial F1 complex assembly factor 1 (324 aa).

The N-terminal 54 residues, 1 to 54, are a transit peptide targeting the mitochondrion; sequence MAAVVSAAGGACPAVLQVAGLYRGLCAVRSRALGLGFVSPAQLRVFPVRRGSGL.

It belongs to the ATP11 family. In terms of assembly, interacts with ATP5F1B; involved in the assembly of the F1 component of the mitochondrial ATP synthase (ATPase). In terms of tissue distribution, widely expressed but with low level.

It localises to the mitochondrion inner membrane. Functionally, has a complex stabilizing activity in the assembly of the mitochondrial F1-F0 complex. This Mus musculus (Mouse) protein is ATP synthase mitochondrial F1 complex assembly factor 1.